We begin with the raw amino-acid sequence, 980 residues long: Conserved oligomeric Golgi complex subunit 1 (980 aa).

Alanine 2 carries the post-translational modification N-acetylalanine. At serine 7 the chain carries Phosphoserine. Lysine 598 is modified (N6-acetyllysine). Positions 923–934 are enriched in polar residues; that stretch reads RATSRSVETQAQ. The tract at residues 923–950 is disordered; that stretch reads RATSRSVETQAQVGPPALSRVGDPTTHP.

Belongs to the COG1 family. As to quaternary structure, component of the conserved oligomeric Golgi complex which is composed of eight different subunits and is required for normal Golgi morphology and localization.

Its subcellular location is the golgi apparatus membrane. Functionally, required for normal Golgi function. The polypeptide is Conserved oligomeric Golgi complex subunit 1 (Cog1) (Mus musculus (Mouse)).